Reading from the N-terminus, the 101-residue chain is NAD(P)H-quinone oxidoreductase subunit 4L, chloroplastic (101 aa).

The next 3 membrane-spanning stretches (helical) occupy residues 2-22 (MLEH…YGLI), 32-52 (MCLE…SDFF), and 61-81 (IFSI…SAIV).

It belongs to the complex I subunit 4L family. In terms of assembly, NDH is composed of at least 16 different subunits, 5 of which are encoded in the nucleus.

The protein resides in the plastid. It is found in the chloroplast thylakoid membrane. It carries out the reaction a plastoquinone + NADH + (n+1) H(+)(in) = a plastoquinol + NAD(+) + n H(+)(out). It catalyses the reaction a plastoquinone + NADPH + (n+1) H(+)(in) = a plastoquinol + NADP(+) + n H(+)(out). NDH shuttles electrons from NAD(P)H:plastoquinone, via FMN and iron-sulfur (Fe-S) centers, to quinones in the photosynthetic chain and possibly in a chloroplast respiratory chain. The immediate electron acceptor for the enzyme in this species is believed to be plastoquinone. Couples the redox reaction to proton translocation, and thus conserves the redox energy in a proton gradient. The sequence is that of NAD(P)H-quinone oxidoreductase subunit 4L, chloroplastic from Citrus sinensis (Sweet orange).